An 892-amino-acid polypeptide reads, in one-letter code: Isoleucine--tRNA ligase (892 aa).

The 'HIGH' region signature appears at 60–70 (PYANGSIHIGH). Glu-552 is an L-isoleucyl-5'-AMP binding site. A 'KMSKS' region motif is present at residues 593 to 597 (KMSKS). Lys-596 provides a ligand contact to ATP. The Zn(2+) site is built by Cys-862, Cys-865, Cys-879, and Cys-882.

The protein belongs to the class-I aminoacyl-tRNA synthetase family. IleS type 1 subfamily. As to quaternary structure, monomer. Requires Zn(2+) as cofactor.

The protein resides in the cytoplasm. It carries out the reaction tRNA(Ile) + L-isoleucine + ATP = L-isoleucyl-tRNA(Ile) + AMP + diphosphate. Its function is as follows. Catalyzes the attachment of isoleucine to tRNA(Ile). As IleRS can inadvertently accommodate and process structurally similar amino acids such as valine, to avoid such errors it has two additional distinct tRNA(Ile)-dependent editing activities. One activity is designated as 'pretransfer' editing and involves the hydrolysis of activated Val-AMP. The other activity is designated 'posttransfer' editing and involves deacylation of mischarged Val-tRNA(Ile). The sequence is that of Isoleucine--tRNA ligase from Mycoplasmopsis agalactiae (strain NCTC 10123 / CIP 59.7 / PG2) (Mycoplasma agalactiae).